Reading from the N-terminus, the 359-residue chain is tRNA N6-adenosine threonylcarbamoyltransferase (359 aa).

Fe cation contacts are provided by H115 and H119. Residues 137–141 (LVSGG), D170, G183, and N283 each bind substrate. D311 contacts Fe cation. The disordered stretch occupies residues 328-359 (APDSLDIAPRSRWPLDEKSAPVFGTGRRGAKA).

It belongs to the KAE1 / TsaD family. The cofactor is Fe(2+).

Its subcellular location is the cytoplasm. The enzyme catalyses L-threonylcarbamoyladenylate + adenosine(37) in tRNA = N(6)-L-threonylcarbamoyladenosine(37) in tRNA + AMP + H(+). In terms of biological role, required for the formation of a threonylcarbamoyl group on adenosine at position 37 (t(6)A37) in tRNAs that read codons beginning with adenine. Is involved in the transfer of the threonylcarbamoyl moiety of threonylcarbamoyl-AMP (TC-AMP) to the N6 group of A37, together with TsaE and TsaB. TsaD likely plays a direct catalytic role in this reaction. This is tRNA N6-adenosine threonylcarbamoyltransferase from Brucella canis (strain ATCC 23365 / NCTC 10854 / RM-666).